The sequence spans 493 residues: Aspartate-semialdehyde dehydrogenase (Non-phosphorylating) (493 aa).

NADP(+)-binding positions include 160–161 (WN), 184–187 (KPAH), and 237–238 (GS). The active-site Proton acceptor is Glu-259. Leu-260 contacts NADP(+). The Nucleophile role is filled by Cys-293. Glu-390 is a binding site for NADP(+).

It belongs to the aldehyde dehydrogenase family.

The protein localises to the cytoplasm. The catalysed reaction is L-aspartate 4-semialdehyde + NAD(+) + H2O = L-aspartate + NADH + 2 H(+). Involved in the degradation of ectoine, which allows H.elongata to utilize ectoine as both a carbon and a nitrogen source for growth. Probably catalyzes the NAD(+)-dependent oxidation of L-aspartate-semialdehyde to L-aspartate. This Halomonas elongata (strain ATCC 33173 / DSM 2581 / NBRC 15536 / NCIMB 2198 / 1H9) protein is Aspartate-semialdehyde dehydrogenase (Non-phosphorylating).